A 412-amino-acid chain; its full sequence is ATP phosphoribosyltransferase regulatory subunit (412 aa).

This sequence belongs to the class-II aminoacyl-tRNA synthetase family. HisZ subfamily. Heteromultimer composed of HisG and HisZ subunits.

It localises to the cytoplasm. The protein operates within amino-acid biosynthesis; L-histidine biosynthesis; L-histidine from 5-phospho-alpha-D-ribose 1-diphosphate: step 1/9. Its function is as follows. Required for the first step of histidine biosynthesis. May allow the feedback regulation of ATP phosphoribosyltransferase activity by histidine. This chain is ATP phosphoribosyltransferase regulatory subunit, found in Dehalococcoides mccartyi (strain CBDB1).